A 344-amino-acid chain; its full sequence is Dihydroorotase (344 aa).

Positions 14 and 16 each coordinate Zn(2+). Residues 16–18 and Asn42 contribute to the substrate site; that span reads HFR. The Zn(2+) site is built by Lys100, His137, and His175. Lys100 bears the N6-carboxylysine mark. Residue His137 participates in substrate binding. Leu220 is a substrate binding site. Asp248 serves as a coordination point for Zn(2+). Residue Asp248 is part of the active site. Substrate is bound by residues His252 and Ala264.

This sequence belongs to the metallo-dependent hydrolases superfamily. DHOase family. Class II DHOase subfamily. As to quaternary structure, homodimer. The cofactor is Zn(2+).

The enzyme catalyses (S)-dihydroorotate + H2O = N-carbamoyl-L-aspartate + H(+). The protein operates within pyrimidine metabolism; UMP biosynthesis via de novo pathway; (S)-dihydroorotate from bicarbonate: step 3/3. Its function is as follows. Catalyzes the reversible cyclization of carbamoyl aspartate to dihydroorotate. This chain is Dihydroorotase, found in Erythrobacter litoralis (strain HTCC2594).